Here is a 318-residue protein sequence, read N- to C-terminus: Aspartate carbamoyltransferase catalytic subunit (318 aa).

Carbamoyl phosphate contacts are provided by Arg-59 and Thr-60. Lys-87 lines the L-aspartate pocket. Residues Arg-109, His-137, and Gln-140 each contribute to the carbamoyl phosphate site. L-aspartate contacts are provided by Arg-170 and Arg-224. 2 residues coordinate carbamoyl phosphate: Gly-265 and Pro-266.

The protein belongs to the aspartate/ornithine carbamoyltransferase superfamily. ATCase family. In terms of assembly, heterododecamer (2C3:3R2) of six catalytic PyrB chains organized as two trimers (C3), and six regulatory PyrI chains organized as three dimers (R2).

The catalysed reaction is carbamoyl phosphate + L-aspartate = N-carbamoyl-L-aspartate + phosphate + H(+). It functions in the pathway pyrimidine metabolism; UMP biosynthesis via de novo pathway; (S)-dihydroorotate from bicarbonate: step 2/3. Its function is as follows. Catalyzes the condensation of carbamoyl phosphate and aspartate to form carbamoyl aspartate and inorganic phosphate, the committed step in the de novo pyrimidine nucleotide biosynthesis pathway. The protein is Aspartate carbamoyltransferase catalytic subunit of Rhizobium johnstonii (strain DSM 114642 / LMG 32736 / 3841) (Rhizobium leguminosarum bv. viciae).